Consider the following 811-residue polypeptide: Glycerol-3-phosphate acyltransferase (811 aa).

Residues 303 to 308 (CHRSHM) carry the HXXXXD motif motif.

Belongs to the GPAT/DAPAT family.

It localises to the cell inner membrane. It carries out the reaction sn-glycerol 3-phosphate + an acyl-CoA = a 1-acyl-sn-glycero-3-phosphate + CoA. Its pathway is phospholipid metabolism; CDP-diacylglycerol biosynthesis; CDP-diacylglycerol from sn-glycerol 3-phosphate: step 1/3. The sequence is that of Glycerol-3-phosphate acyltransferase from Glaesserella parasuis serovar 5 (strain SH0165) (Haemophilus parasuis).